Consider the following 272-residue polypeptide: EID1-like F-box protein 3 (272 aa).

An F-box domain is found at 29 to 81 (SGKSGIENERVLVLVFESISWDIHTLCTIASLSRRFCAIARRILWRRLCVNRA).

The sequence is that of EID1-like F-box protein 3 (EDL3) from Arabidopsis thaliana (Mouse-ear cress).